Here is a 225-residue protein sequence, read N- to C-terminus: Proteoglycan 3 (225 aa).

An N-terminal signal peptide occupies residues 1–17 (MQCLLLLPFLLLGTVSA). A C-type lectin domain is found at 107–224 (CKICRYLLVR…CDKQLPFVCS (118 aa)). Disulfide bonds link cysteine 128/cysteine 223 and cysteine 200/cysteine 215.

As to expression, expressed in bone marrow. Not detected in placenta.

Its subcellular location is the cytoplasmic granule. Its function is as follows. Possesses similar cytotoxic and cytostimulatory activities to PRG2/MBP. In vitro, stimulates neutrophil superoxide production and IL8 release, and histamine and leukotriene C4 release from basophils. The chain is Proteoglycan 3 from Homo sapiens (Human).